A 369-amino-acid polypeptide reads, in one-letter code: UDP-3-O-acylglucosamine N-acyltransferase (369 aa).

His-263 serves as the catalytic Proton acceptor.

It belongs to the transferase hexapeptide repeat family. LpxD subfamily. In terms of assembly, homotrimer.

The enzyme catalyses a UDP-3-O-[(3R)-3-hydroxyacyl]-alpha-D-glucosamine + a (3R)-hydroxyacyl-[ACP] = a UDP-2-N,3-O-bis[(3R)-3-hydroxyacyl]-alpha-D-glucosamine + holo-[ACP] + H(+). Its pathway is bacterial outer membrane biogenesis; LPS lipid A biosynthesis. Functionally, catalyzes the N-acylation of UDP-3-O-acylglucosamine using 3-hydroxyacyl-ACP as the acyl donor. Is involved in the biosynthesis of lipid A, a phosphorylated glycolipid that anchors the lipopolysaccharide to the outer membrane of the cell. The chain is UDP-3-O-acylglucosamine N-acyltransferase from Burkholderia vietnamiensis (strain G4 / LMG 22486) (Burkholderia cepacia (strain R1808)).